The following is a 460-amino-acid chain: Bifunctional protein GlmU (460 aa).

The interval 1–229 is pyrophosphorylase; sequence MTNYAIILAA…FNESLGVNDR (229 aa). UDP-N-acetyl-alpha-D-glucosamine contacts are provided by residues 8–11, Lys-22, Gln-72, and 77–78; these read LAAG and GT. Asp-102 is a binding site for Mg(2+). Gly-139, Glu-154, Asn-169, and Asn-227 together coordinate UDP-N-acetyl-alpha-D-glucosamine. Position 227 (Asn-227) interacts with Mg(2+). The interval 230-250 is linker; the sequence is VALATAETVMRQRITQKHMVN. The segment at 251–460 is N-acetyltransferase; that stretch reads GVTFQNPETV…RLAHHPSRSK (210 aa). Arg-332 and Lys-350 together coordinate UDP-N-acetyl-alpha-D-glucosamine. Residue His-362 is the Proton acceptor of the active site. Residues Tyr-365 and Asn-376 each coordinate UDP-N-acetyl-alpha-D-glucosamine. Residues Ala-379, 385–386, Ser-404, Ala-422, and Arg-439 contribute to the acetyl-CoA site; that span reads NY.

The protein in the N-terminal section; belongs to the N-acetylglucosamine-1-phosphate uridyltransferase family. It in the C-terminal section; belongs to the transferase hexapeptide repeat family. In terms of assembly, homotrimer. Requires Mg(2+) as cofactor.

It localises to the cytoplasm. The enzyme catalyses alpha-D-glucosamine 1-phosphate + acetyl-CoA = N-acetyl-alpha-D-glucosamine 1-phosphate + CoA + H(+). It carries out the reaction N-acetyl-alpha-D-glucosamine 1-phosphate + UTP + H(+) = UDP-N-acetyl-alpha-D-glucosamine + diphosphate. Its pathway is nucleotide-sugar biosynthesis; UDP-N-acetyl-alpha-D-glucosamine biosynthesis; N-acetyl-alpha-D-glucosamine 1-phosphate from alpha-D-glucosamine 6-phosphate (route II): step 2/2. The protein operates within nucleotide-sugar biosynthesis; UDP-N-acetyl-alpha-D-glucosamine biosynthesis; UDP-N-acetyl-alpha-D-glucosamine from N-acetyl-alpha-D-glucosamine 1-phosphate: step 1/1. It participates in bacterial outer membrane biogenesis; LPS lipid A biosynthesis. Its function is as follows. Catalyzes the last two sequential reactions in the de novo biosynthetic pathway for UDP-N-acetylglucosamine (UDP-GlcNAc). The C-terminal domain catalyzes the transfer of acetyl group from acetyl coenzyme A to glucosamine-1-phosphate (GlcN-1-P) to produce N-acetylglucosamine-1-phosphate (GlcNAc-1-P), which is converted into UDP-GlcNAc by the transfer of uridine 5-monophosphate (from uridine 5-triphosphate), a reaction catalyzed by the N-terminal domain. The chain is Bifunctional protein GlmU from Streptococcus pyogenes serotype M6 (strain ATCC BAA-946 / MGAS10394).